The following is a 363-amino-acid chain: Protein arginine N-methyltransferase 2 (363 aa).

2 ANK repeats span residues 22-46 (AAQT…FQDD) and 48-80 (LGWS…AVDK). The RMT2 domain occupies 111 to 363 (KTSAGDNLVF…RLPIAKMSLI (253 aa)). S-adenosyl-L-methionine contacts are provided by residues Phe-120, 186–191 (FGLGIV), 209–211 (EAH), 236–237 (WQ), and Asp-265.

Belongs to the class I-like SAM-binding methyltransferase superfamily. RMT2 methyltransferase family. In terms of assembly, monomer.

The protein resides in the cytoplasm. The protein localises to the nucleus. In terms of biological role, S-adenosyl-L-methionine-dependent protein-arginine N-methyltransferase that methylates the delta-nitrogen atom of arginine residues to form N5-methylarginine (type IV) in target proteins. Monomethylates ribosomal protein L12. The protein is Protein arginine N-methyltransferase 2 of Cryptococcus neoformans var. neoformans serotype D (strain B-3501A) (Filobasidiella neoformans).